Consider the following 371-residue polypeptide: Mitogen-activated protein kinase homolog NTF6 (371 aa).

The region spanning 38–324 (IPPIQPVGRG…VEDALNHPFL (287 aa)) is the Protein kinase domain. ATP is bound by residues 44 to 52 (VGRGAYGMV) and K67. The Proton acceptor role is filled by D164. T196 carries the phosphothreonine modification. The TXY motif lies at 196–198 (TEY). Y198 is modified (phosphotyrosine).

It belongs to the protein kinase superfamily. CMGC Ser/Thr protein kinase family. MAP kinase subfamily. Requires Mg(2+) as cofactor. In terms of processing, dually phosphorylated on Thr-196 and Tyr-198, which activates the enzyme. Very low autophosphorylation, although dramatically increased when Mn(2+) is added to the reaction instead of Mg(2+).

It carries out the reaction L-seryl-[protein] + ATP = O-phospho-L-seryl-[protein] + ADP + H(+). The enzyme catalyses L-threonyl-[protein] + ATP = O-phospho-L-threonyl-[protein] + ADP + H(+). Its activity is regulated as follows. Activated by tyrosine and threonine phosphorylation. This is Mitogen-activated protein kinase homolog NTF6 (NTF6) from Nicotiana tabacum (Common tobacco).